The following is a 424-amino-acid chain: MVFVACGLNHKTAPIHVREKVALQPAMQDSLLSSLLDLPEVNEAAILSTCNRTEIYCDTNTPEVLGNWLAHEHQLSEELLSQFLYIHQGKEGIKHTLRVASGLDSMMIGEPQILGQMKQAYQHACRLGTVKTQLRPVFEYIFRASKRIRTRSGIGANPVSIAYAAVQLIGQLFKNYHSLSVFLIGSGETASLVAKYLHQHGVHRFLIASRTLENAQKLAETFGGKTLSIGDIPQYLPLADVVISATACPLPFINKSLVEHALEQRNHAPMFLLDLAVPRDIEGNVNELEQVHLYNVDDLQSMIEKGMDERRNAALQAEQLIESELDNYIRWHRSLRAKDVICDYRNQMHTLAQQELQRALKKISAGQNQQDVLNEFSMRLVNKLTHNPTIGLRQIAWDNREDLLDLARYLFDTTANQSLYEEIS.

Substrate contacts are provided by residues 49 to 52 (TCNR), Ser105, 110 to 112 (EPQ), and Gln116. Cys50 serves as the catalytic Nucleophile. 185 to 190 (GSGETA) contributes to the NADP(+) binding site.

This sequence belongs to the glutamyl-tRNA reductase family. In terms of assembly, homodimer.

It catalyses the reaction (S)-4-amino-5-oxopentanoate + tRNA(Glu) + NADP(+) = L-glutamyl-tRNA(Glu) + NADPH + H(+). It functions in the pathway porphyrin-containing compound metabolism; protoporphyrin-IX biosynthesis; 5-aminolevulinate from L-glutamyl-tRNA(Glu): step 1/2. Functionally, catalyzes the NADPH-dependent reduction of glutamyl-tRNA(Glu) to glutamate 1-semialdehyde (GSA). This chain is Glutamyl-tRNA reductase, found in Legionella pneumophila (strain Paris).